The sequence spans 114 residues: uncharacterized protein (114 aa).

The interval 1–114 is disordered; sequence MSTAASSRMR…HASQSPDTAY (114 aa). Over residues 32–43 the composition is skewed to low complexity; that stretch reads CRRVPSRPCRPV.

This is an uncharacterized protein from Human adenovirus B serotype 7 (HAdV-7).